The sequence spans 292 residues: Bifunctional protein FolD (292 aa).

Residues 165 to 167 (GRS), S190, and T231 each bind NADP(+).

Belongs to the tetrahydrofolate dehydrogenase/cyclohydrolase family. Homodimer.

It carries out the reaction (6R)-5,10-methylene-5,6,7,8-tetrahydrofolate + NADP(+) = (6R)-5,10-methenyltetrahydrofolate + NADPH. The catalysed reaction is (6R)-5,10-methenyltetrahydrofolate + H2O = (6R)-10-formyltetrahydrofolate + H(+). It functions in the pathway one-carbon metabolism; tetrahydrofolate interconversion. In terms of biological role, catalyzes the oxidation of 5,10-methylenetetrahydrofolate to 5,10-methenyltetrahydrofolate and then the hydrolysis of 5,10-methenyltetrahydrofolate to 10-formyltetrahydrofolate. This is Bifunctional protein FolD from Arthrobacter globiformis.